A 155-amino-acid polypeptide reads, in one-letter code: Ribonuclease H (155 aa).

An RNase H type-1 domain is found at 1–142 (MLKQVEIFTD…CDELARAAAM (142 aa)). Asp10, Glu48, Asp70, and Asp134 together coordinate Mg(2+).

It belongs to the RNase H family. Monomer. The cofactor is Mg(2+).

It localises to the cytoplasm. It carries out the reaction Endonucleolytic cleavage to 5'-phosphomonoester.. Endonuclease that specifically degrades the RNA of RNA-DNA hybrids. In Salmonella paratyphi C (strain RKS4594), this protein is Ribonuclease H.